Consider the following 317-residue polypeptide: Methionyl-tRNA formyltransferase (317 aa).

Serine 112–proline 115 provides a ligand contact to (6S)-5,6,7,8-tetrahydrofolate.

The protein belongs to the Fmt family.

It catalyses the reaction L-methionyl-tRNA(fMet) + (6R)-10-formyltetrahydrofolate = N-formyl-L-methionyl-tRNA(fMet) + (6S)-5,6,7,8-tetrahydrofolate + H(+). Attaches a formyl group to the free amino group of methionyl-tRNA(fMet). The formyl group appears to play a dual role in the initiator identity of N-formylmethionyl-tRNA by promoting its recognition by IF2 and preventing the misappropriation of this tRNA by the elongation apparatus. This chain is Methionyl-tRNA formyltransferase, found in Mycoplasma capricolum subsp. capricolum (strain California kid / ATCC 27343 / NCTC 10154).